We begin with the raw amino-acid sequence, 311 residues long: tRNA dimethylallyltransferase (311 aa).

11 to 18 (GPTAVGKT) is an ATP binding site. Residue 13 to 18 (TAVGKT) coordinates substrate. The interval 36-39 (DSMQ) is interaction with substrate tRNA.

This sequence belongs to the IPP transferase family. In terms of assembly, monomer. The cofactor is Mg(2+).

The catalysed reaction is adenosine(37) in tRNA + dimethylallyl diphosphate = N(6)-dimethylallyladenosine(37) in tRNA + diphosphate. Functionally, catalyzes the transfer of a dimethylallyl group onto the adenine at position 37 in tRNAs that read codons beginning with uridine, leading to the formation of N6-(dimethylallyl)adenosine (i(6)A). The protein is tRNA dimethylallyltransferase of Clostridioides difficile (strain 630) (Peptoclostridium difficile).